Here is a 309-residue protein sequence, read N- to C-terminus: GTP cyclohydrolase MptA (309 aa).

This sequence belongs to the GTP cyclohydrolase IV family. As to quaternary structure, homodimer. Fe(2+) serves as cofactor.

It catalyses the reaction GTP + H2O = 7,8-dihydroneopterin 2',3'-cyclic phosphate + formate + diphosphate + H(+). The protein operates within cofactor biosynthesis; 5,6,7,8-tetrahydromethanopterin biosynthesis. Converts GTP to 7,8-dihydro-D-neopterin 2',3'-cyclic phosphate, the first intermediate in the biosynthesis of coenzyme methanopterin. This is GTP cyclohydrolase MptA from Haloquadratum walsbyi (strain DSM 16790 / HBSQ001).